A 291-amino-acid chain; its full sequence is Phytanoyl-CoA dioxygenase domain-containing protein 1 (291 aa).

A Phosphothreonine modification is found at Thr-55. 2-oxoglutarate-binding positions include Lys-102, Met-141, 156–158 (HQD), and Trp-174. His-156 and Asp-158 together coordinate Fe cation. His-246 serves as a coordination point for Fe cation. 2-oxoglutarate-binding residues include Ser-248 and Arg-257.

It belongs to the PhyH family. PHYHD1 subfamily. Requires Fe cation as cofactor.

2-oxoglutarate(2OG)-dependent dioxygenase that catalyzes the conversion of 2-oxoglutarate to succinate and CO(2) in an iron-dependent manner. However, does not couple 2OG turnover to the hydroxylation of acyl-coenzyme A derivatives, implying that it is not directly involved in phytanoyl coenzyme-A metabolism. Does not show detectable activity towards fatty acid CoA thioesters. This chain is Phytanoyl-CoA dioxygenase domain-containing protein 1, found in Mus musculus (Mouse).